The following is an 828-amino-acid chain: MNSDQDVALKLAQERAEIVAKYDRGREGAEIEPWEDADYLVYKVTDRFGFLHEEELPDHNVAVERQKHLEIERTTKWLKMLKGWEKYKNTEKFHRRIYKGIPLQLRGEVWALLLEIPKMKEETRDLYSKLKHRARGCSPDIRQIDLDVNRTFRDHIMFRDRYGVKQQSLFHVLAAYSIYNTEVGYCQGMSQITALLLMYMNEEDAFWALVKLFSGPKHAMHGFFVQGFPKLLRFQEHHEKILNKFLSKLKQHLDSQEIYTSFYTMKWFFQCFLDRTPFTLNLRIWDIYIFEGERVLTAMSYTILKLHKKHLMKLSMEELVEFFQETLAKDFFFEDDFVIEQLQISMTELKRAKLDLPEPGKEDEYPKKPLGQLPPELQSWGVHHLSNGQRSVGRPSPLASGRRESGAPHRRHEHSPHPQSRTGTPERAQPPRRKSVEEESKKLKDEADFQRKLPSGPQDSSRQYNHAAANQNSNATSNIRKEFVPKWNKPSDVSATERTAKYTMEGKGRAAHPALAVTVPGPAEVRVSNVRPKMKALDAEDGKRGSTASQYDNVPGPELDSGASVEEALERAYSQSPRHALYPPSPRKHAEPSSSPSKVSNKFTFKVQPPSHARYPSQLDGEARGLAHPPSYSNPPVYHGNSPKHFPTANSSFASPQFSPGTQLNPSRRPHGSTLSVSASPEKSYSRPSPLVLPSSRIEVLPVDTGAGGYSGNSGSPKNGKLIIPPVDYLPDNRTWSEVSYTYRPETQGQSWTRDASRGNLPKYSAFQLAPFQDHGLPAVSVDSPVRYKASPAAEDASPSGYPYSGPPPPAYHYRNRDGLSIQESVLL.

An N-acetylmethionine modification is found at Met1. In terms of domain architecture, Rab-GAP TBC spans 100–292 (GIPLQLRGEV…RIWDIYIFEG (193 aa)). Basic and acidic residues predominate over residues 355-367 (DLPEPGKEDEYPK). The segment at 355–722 (DLPEPGKEDE…NSGSPKNGKL (368 aa)) is disordered. Ser391, Ser396, and Ser400 each carry phosphoserine. Residues 434 to 451 (KSVEEESKKLKDEADFQR) are compositionally biased toward basic and acidic residues. The segment covering 465–478 (NHAAANQNSNATSN) has biased composition (low complexity). 2 stretches are compositionally biased toward basic and acidic residues: residues 498-508 (RTAKYTMEGKG) and 535-544 (KALDAEDGKR). Residues Ser546 and Ser549 each carry the phosphoserine modification. Tyr582 carries the post-translational modification Phosphotyrosine. At Ser585 the chain carries Phosphoserine. Residues 592 to 603 (PSSSPSKVSNKF) show a composition bias toward polar residues. Residues Ser642, Ser655, Ser659, Ser676, and Ser680 each carry the phosphoserine modification. 2 stretches are compositionally biased toward polar residues: residues 648–666 (TANS…QLNP) and 673–683 (STLSVSASPEK). The span at 686–697 (SRPSPLVLPSSR) shows a compositional bias: low complexity. Ser716 is subject to Phosphoserine. Residue Tyr729 is modified to Phosphotyrosine. Positions 789-817 (KASPAAEDASPSGYPYSGPPPPAYHYRNR) are disordered.

In terms of assembly, interacts with EPS8. As to expression, widely expressed.

It localises to the golgi apparatus. The protein localises to the cytoplasmic vesicle. Its function is as follows. Acts as a GTPase-activating protein for RAB5A and RAB43. Involved in receptor trafficking. In complex with EPS8 inhibits internalization of EGFR. Involved in retrograde transport from the endocytic pathway to the Golgi apparatus. Involved in the transport of Shiga toxin from early and recycling endosomes to the trans-Golgi network. Required for structural integrity of the Golgi complex. This is USP6 N-terminal-like protein (USP6NL) from Homo sapiens (Human).